A 149-amino-acid polypeptide reads, in one-letter code: Transcriptional regulator MraZ (149 aa).

SpoVT-AbrB domains are found at residues arginine 6–aspartate 52 and alanine 81–lysine 124.

Belongs to the MraZ family. In terms of assembly, forms oligomers.

The protein resides in the cytoplasm. It localises to the nucleoid. The chain is Transcriptional regulator MraZ from Nitratidesulfovibrio vulgaris (strain ATCC 29579 / DSM 644 / CCUG 34227 / NCIMB 8303 / VKM B-1760 / Hildenborough) (Desulfovibrio vulgaris).